The sequence spans 73 residues: Beta-1 adrenergic receptor (73 aa).

Residues 1 to 12 traverse the membrane as a helical segment; the sequence is ISALVSFLPILM. At 13–38 the chain is on the extracellular side; it reads HWWRAENDEARRCYNDPKCCDFVTNR. C25 and C31 are disulfide-bonded. A helical transmembrane segment spans residues 39-64; sequence AYAIASSVVSFYVPLCIMAFVYLRVF. S44 provides a ligand contact to cyanopindolol. The Cytoplasmic segment spans residues 65 to 73; it reads REAQKQVKK.

The protein belongs to the G-protein coupled receptor 1 family. Adrenergic receptor subfamily. ADRB1 sub-subfamily. Interacts (via C-terminus PDZ motif) with RAPGEF2; the interaction is direct. Interacts with GOPC, MAGI3 and DLG4. Post-translationally, homologous desensitization of the receptor is mediated by its phosphorylation by beta-adrenergic receptor kinase.

It localises to the cell membrane. Its subcellular location is the early endosome. In terms of biological role, beta-adrenergic receptors mediate the catecholamine-induced activation of adenylate cyclase through the action of G proteins. This receptor binds epinephrine and norepinephrine with approximately equal affinity. Mediates Ras activation through G(s)-alpha- and cAMP-mediated signaling. In dorsal pons neurons, involved in the regulation of sleep/wake behaviors. This is Beta-1 adrenergic receptor (ADRB1) from Meriones unguiculatus (Mongolian jird).